The sequence spans 203 residues: Coupling of ubiquitin conjugation to ER degradation protein 1 (203 aa).

At methionine 1–leucine 6 the chain is on the lumenal side. A helical transmembrane segment spans residues leucine 7–phenylalanine 23. The Cytoplasmic portion of the chain corresponds to glutamine 24 to threonine 203. The tract at residues alanine 36–glycine 61 is disordered. Residues valine 65–glutamate 107 form the CUE domain.

It belongs to the CUE1 family. Forms a heterodimer with UBC7. Interacts with SSM4/DOA10 and UBX2/SEL1.

It is found in the endoplasmic reticulum membrane. In terms of biological role, component of the endoplasmic reticulum-associated protein degradation (ERAD) pathway. Recruits the soluble ubiquitin-conjugating enzyme UBC7 to the cytoplasmic face of the endoplasmic reticulum membrane where it functions in degradation of misfolded or regulated proteins localized in the endoplasmic reticulum (ER) lumen or membrane via the ubiquitin-proteasome system. Targets the E2 conjugating enzyme UBC7 to the DOA10 ubiquitin ligase complex, which is part of the ERAD-C pathway responsible for the rapid degradation of membrane proteins with misfolded cytoplasmic domains, and to the HRD1 ubiquitin ligase complex, which is part of the ERAD-L and ERAD-M pathways responsible for the rapid degradation of soluble lumenal and membrane proteins with misfolded lumenal domains (ERAD-L), or ER-membrane proteins with misfolded transmembrane domains (ERAD-M). Also has a role in cold adaptation, perhaps through effects on sterol biosynthesis. This Saccharomyces cerevisiae (strain ATCC 204508 / S288c) (Baker's yeast) protein is Coupling of ubiquitin conjugation to ER degradation protein 1 (CUE1).